Consider the following 55-residue polypeptide: ATP synthase protein 8 (55 aa).

A helical transmembrane segment spans residues L11–L31.

Belongs to the ATPase protein 8 family. As to quaternary structure, F-type ATPases have 2 components, CF(1) - the catalytic core - and CF(0) - the membrane proton channel.

Its subcellular location is the mitochondrion membrane. In terms of biological role, mitochondrial membrane ATP synthase (F(1)F(0) ATP synthase or Complex V) produces ATP from ADP in the presence of a proton gradient across the membrane which is generated by electron transport complexes of the respiratory chain. F-type ATPases consist of two structural domains, F(1) - containing the extramembraneous catalytic core and F(0) - containing the membrane proton channel, linked together by a central stalk and a peripheral stalk. During catalysis, ATP synthesis in the catalytic domain of F(1) is coupled via a rotary mechanism of the central stalk subunits to proton translocation. Part of the complex F(0) domain. Minor subunit located with subunit a in the membrane. The chain is ATP synthase protein 8 (MT-ATP8) from Albinaria caerulea (Land snail).